Here is a 249-residue protein sequence, read N- to C-terminus: ATP synthase subunit a (249 aa).

5 helical membrane passes run 33 to 53, 92 to 112, 131 to 151, 196 to 216, and 217 to 237; these read GQVI…SIAA, LPFI…GALI, INTT…AGIS, LVVA…LMAL, and GLFT…AYIH.

The protein belongs to the ATPase A chain family. As to quaternary structure, F-type ATPases have 2 components, CF(1) - the catalytic core - and CF(0) - the membrane proton channel. CF(1) has five subunits: alpha(3), beta(3), gamma(1), delta(1), epsilon(1). CF(0) has four main subunits: a, b, b' and c.

The protein localises to the cellular thylakoid membrane. Functionally, key component of the proton channel; it plays a direct role in the translocation of protons across the membrane. The chain is ATP synthase subunit a from Microcystis aeruginosa (strain NIES-843 / IAM M-2473).